We begin with the raw amino-acid sequence, 290 residues long: Glutaredoxin domain-containing cysteine-rich protein 1 (290 aa).

The 108-residue stretch at L127 to Q234 folds into the Glutaredoxin domain.

This sequence belongs to the GRXCR1 family. In the inner ear, expressed predominantly in sensory hair cells and their stereocilia bundles with higher levels in outer hair cells (OHC) at P1 and in inner hair cells (IHC) at P5. At P1, expression is prominent in each row of stereocilia within bundles including immature shorter stereocilia. Expression is also observed in apical microvilli of sensory cells at P1 and in kinocilia at P1 and P5. In the adult, expression is localized throughout the length of the stereocilia of both OHC and IHC (at protein level).

Its subcellular location is the cell projection. It localises to the stereocilium. The protein localises to the microvillus. The protein resides in the kinocilium. May play a role in actin filament architecture in developing stereocilia of sensory cells. This Mus musculus (Mouse) protein is Glutaredoxin domain-containing cysteine-rich protein 1 (Grxcr1).